The chain runs to 101 residues: Putative pterin-4-alpha-carbinolamine dehydratase (101 aa).

Belongs to the pterin-4-alpha-carbinolamine dehydratase family.

The catalysed reaction is (4aS,6R)-4a-hydroxy-L-erythro-5,6,7,8-tetrahydrobiopterin = (6R)-L-erythro-6,7-dihydrobiopterin + H2O. The polypeptide is Putative pterin-4-alpha-carbinolamine dehydratase (phhB) (Ralstonia nicotianae (strain ATCC BAA-1114 / GMI1000) (Ralstonia solanacearum)).